We begin with the raw amino-acid sequence, 28 residues long: trp operon leader peptide (28 aa).

This protein is involved in control of the biosynthesis of tryptophan. The polypeptide is trp operon leader peptide (trpL) (Serratia marcescens).